The sequence spans 343 residues: UDP-3-O-acylglucosamine N-acyltransferase (343 aa).

Catalysis depends on His-239, which acts as the Proton acceptor.

The protein belongs to the transferase hexapeptide repeat family. LpxD subfamily. In terms of assembly, homotrimer.

The enzyme catalyses a UDP-3-O-[(3R)-3-hydroxyacyl]-alpha-D-glucosamine + a (3R)-hydroxyacyl-[ACP] = a UDP-2-N,3-O-bis[(3R)-3-hydroxyacyl]-alpha-D-glucosamine + holo-[ACP] + H(+). Its pathway is bacterial outer membrane biogenesis; LPS lipid A biosynthesis. Functionally, catalyzes the N-acylation of UDP-3-O-acylglucosamine using 3-hydroxyacyl-ACP as the acyl donor. Is involved in the biosynthesis of lipid A, a phosphorylated glycolipid that anchors the lipopolysaccharide to the outer membrane of the cell. The sequence is that of UDP-3-O-acylglucosamine N-acyltransferase from Vibrio parahaemolyticus serotype O3:K6 (strain RIMD 2210633).